Consider the following 155-residue polypeptide: Small ribosomal subunit protein uS8m (155 aa).

The protein belongs to the universal ribosomal protein uS8 family. In terms of assembly, component of the mitochondrial small ribosomal subunit (mt-SSU). Mature yeast 74S mitochondrial ribosomes consist of a small (37S) and a large (54S) subunit. The 37S small subunit contains a 15S ribosomal RNA (15S mt-rRNA) and 34 different proteins. The 54S large subunit contains a 21S rRNA (21S mt-rRNA) and 46 different proteins.

It localises to the mitochondrion. Its function is as follows. Component of the mitochondrial ribosome (mitoribosome), a dedicated translation machinery responsible for the synthesis of mitochondrial genome-encoded proteins, including at least some of the essential transmembrane subunits of the mitochondrial respiratory chain. The mitoribosomes are attached to the mitochondrial inner membrane and translation products are cotranslationally integrated into the membrane. The sequence is that of Small ribosomal subunit protein uS8m (MRPS8) from Saccharomyces cerevisiae (strain ATCC 204508 / S288c) (Baker's yeast).